We begin with the raw amino-acid sequence, 88 residues long: Elongation factor 1-beta (88 aa).

Belongs to the EF-1-beta/EF-1-delta family.

Its function is as follows. Promotes the exchange of GDP for GTP in EF-1-alpha/GDP, thus allowing the regeneration of EF-1-alpha/GTP that could then be used to form the ternary complex EF-1-alpha/GTP/AAtRNA. This is Elongation factor 1-beta (ef1b) from Thermoplasma acidophilum (strain ATCC 25905 / DSM 1728 / JCM 9062 / NBRC 15155 / AMRC-C165).